A 447-amino-acid chain; its full sequence is Ion-translocating oxidoreductase complex subunit C (447 aa).

4Fe-4S ferredoxin-type domains lie at 359–389 (AEVL…GRIA) and 399–430 (RCRE…LIRY). Residues Cys-369, Cys-372, Cys-375, Cys-379, Cys-408, Cys-411, Cys-414, and Cys-418 each contribute to the [4Fe-4S] cluster site.

Belongs to the 4Fe4S bacterial-type ferredoxin family. RnfC subfamily. The Rnf complex is probably composed of eight subunits, including RnfA, RnfB, RnfC, RnfD, RnfE and RnfG. The cofactor is [4Fe-4S] cluster.

It is found in the cell membrane. Functionally, part of a membrane-bound complex that couples electron transfer with translocation of ions across the membrane. Catalyzes Na(+) transport, most probably coupled to electron transfer from reduced ferredoxin to methanophenazine and heterodisulfide reductase. Involved in heterodisulfide reduction during methanogenesis from acetate. In Methanosarcina acetivorans (strain ATCC 35395 / DSM 2834 / JCM 12185 / C2A), this protein is Ion-translocating oxidoreductase complex subunit C.